Consider the following 352-residue polypeptide: Cyclin-dependent kinase-like 1 (352 aa).

The Protein kinase domain occupies 4 to 287 (YEKIGKIGEG…CEQLLQHPYF (284 aa)). ATP contacts are provided by residues 10–18 (IGEGSYGVV) and Lys-33. Positions 45–51 (KKIALRE) match the [NKR]KIAxRE motif. The Proton acceptor role is filled by Asp-126.

This sequence belongs to the protein kinase superfamily. CMGC Ser/Thr protein kinase family. CDC2/CDKX subfamily.

Its subcellular location is the cytoplasm. The protein resides in the nucleus. It catalyses the reaction L-seryl-[protein] + ATP = O-phospho-L-seryl-[protein] + ADP + H(+). The catalysed reaction is L-threonyl-[protein] + ATP = O-phospho-L-threonyl-[protein] + ADP + H(+). The polypeptide is Cyclin-dependent kinase-like 1 (Rattus norvegicus (Rat)).